A 214-amino-acid chain; its full sequence is Adenylate kinase (214 aa).

10 to 15 is an ATP binding site; sequence GAGKGT. An NMP region spans residues 30 to 59; that stretch reads STGDMFRDHKARGTEIGKQVQAIMDAGGLV. AMP is bound by residues threonine 31, arginine 36, 57–59, 85–88, and glutamine 92; these read GLV and GYPR. The tract at residues 126-163 is LID; sequence GRRSCPRCGAVYHVSQNPPHRAGFCDRDDAALVQREDD. Arginine 127 is a binding site for ATP. Residues cysteine 130 and cysteine 133 each contribute to the Zn(2+) site. 136-137 is a binding site for ATP; sequence VY. Positions 150 and 153 each coordinate Zn(2+). AMP contacts are provided by arginine 160 and arginine 171. Residue glycine 199 coordinates ATP.

This sequence belongs to the adenylate kinase family. As to quaternary structure, monomer.

Its subcellular location is the cytoplasm. It carries out the reaction AMP + ATP = 2 ADP. It functions in the pathway purine metabolism; AMP biosynthesis via salvage pathway; AMP from ADP: step 1/1. Its function is as follows. Catalyzes the reversible transfer of the terminal phosphate group between ATP and AMP. Plays an important role in cellular energy homeostasis and in adenine nucleotide metabolism. The protein is Adenylate kinase of Anaeromyxobacter dehalogenans (strain 2CP-1 / ATCC BAA-258).